The chain runs to 178 residues: Large ribosomal subunit protein uL6 (178 aa).

Belongs to the universal ribosomal protein uL6 family. Part of the 50S ribosomal subunit.

Functionally, this protein binds to the 23S rRNA, and is important in its secondary structure. It is located near the subunit interface in the base of the L7/L12 stalk, and near the tRNA binding site of the peptidyltransferase center. The chain is Large ribosomal subunit protein uL6 from Campylobacter fetus subsp. fetus (strain 82-40).